The sequence spans 462 residues: tRNA(Ile2) 2-agmatinylcytidine synthetase TiaS (462 aa).

It belongs to the TiaS family.

It localises to the cytoplasm. The catalysed reaction is cytidine(34) in tRNA(Ile2) + agmatine + ATP + H2O = 2-agmatinylcytidine(34) in tRNA(Ile2) + AMP + 2 phosphate + 2 H(+). ATP-dependent agmatine transferase that catalyzes the formation of 2-agmatinylcytidine (agm2C) at the wobble position (C34) of tRNA(Ile2), converting the codon specificity from AUG to AUA. This chain is tRNA(Ile2) 2-agmatinylcytidine synthetase TiaS, found in Haloquadratum walsbyi (strain DSM 16790 / HBSQ001).